The following is a 458-amino-acid chain: Exodeoxyribonuclease 7 large subunit (458 aa).

The protein belongs to the XseA family. In terms of assembly, heterooligomer composed of large and small subunits.

Its subcellular location is the cytoplasm. The enzyme catalyses Exonucleolytic cleavage in either 5'- to 3'- or 3'- to 5'-direction to yield nucleoside 5'-phosphates.. Its function is as follows. Bidirectionally degrades single-stranded DNA into large acid-insoluble oligonucleotides, which are then degraded further into small acid-soluble oligonucleotides. This is Exodeoxyribonuclease 7 large subunit from Geobacter sp. (strain M21).